A 473-amino-acid chain; its full sequence is 3-isopropylmalate dehydratase large subunit (473 aa).

The [4Fe-4S] cluster site is built by C354, C414, and C417.

It belongs to the aconitase/IPM isomerase family. LeuC type 1 subfamily. Heterodimer of LeuC and LeuD. [4Fe-4S] cluster serves as cofactor.

The enzyme catalyses (2R,3S)-3-isopropylmalate = (2S)-2-isopropylmalate. The protein operates within amino-acid biosynthesis; L-leucine biosynthesis; L-leucine from 3-methyl-2-oxobutanoate: step 2/4. Functionally, catalyzes the isomerization between 2-isopropylmalate and 3-isopropylmalate, via the formation of 2-isopropylmaleate. The sequence is that of 3-isopropylmalate dehydratase large subunit from Mycobacterium tuberculosis (strain CDC 1551 / Oshkosh).